The chain runs to 155 residues: Putative pre-16S rRNA nuclease (155 aa).

Belongs to the YqgF nuclease family.

The protein resides in the cytoplasm. In terms of biological role, could be a nuclease involved in processing of the 5'-end of pre-16S rRNA. The chain is Putative pre-16S rRNA nuclease from Wolbachia sp. subsp. Brugia malayi (strain TRS).